Reading from the N-terminus, the 407-residue chain is 1-deoxy-D-xylulose 5-phosphate reductoisomerase (407 aa).

NADPH is bound by residues T25, G26, S27, I28, N53, and N136. A 1-deoxy-D-xylulose 5-phosphate-binding site is contributed by K137. E138 is a binding site for NADPH. D162 contacts Mn(2+). S163, E164, S188, and H211 together coordinate 1-deoxy-D-xylulose 5-phosphate. E164 is a Mn(2+) binding site. NADPH is bound at residue G217. S224, N229, K230, and E233 together coordinate 1-deoxy-D-xylulose 5-phosphate. E233 provides a ligand contact to Mn(2+).

This sequence belongs to the DXR family. It depends on Mg(2+) as a cofactor. Mn(2+) is required as a cofactor.

It catalyses the reaction 2-C-methyl-D-erythritol 4-phosphate + NADP(+) = 1-deoxy-D-xylulose 5-phosphate + NADPH + H(+). Its pathway is isoprenoid biosynthesis; isopentenyl diphosphate biosynthesis via DXP pathway; isopentenyl diphosphate from 1-deoxy-D-xylulose 5-phosphate: step 1/6. Its function is as follows. Catalyzes the NADPH-dependent rearrangement and reduction of 1-deoxy-D-xylulose-5-phosphate (DXP) to 2-C-methyl-D-erythritol 4-phosphate (MEP). The sequence is that of 1-deoxy-D-xylulose 5-phosphate reductoisomerase from Bradyrhizobium sp. (strain BTAi1 / ATCC BAA-1182).